The primary structure comprises 195 residues: ATP-dependent Clp protease proteolytic subunit (195 aa).

S99 acts as the Nucleophile in catalysis. Residue H124 is part of the active site.

It belongs to the peptidase S14 family. Fourteen ClpP subunits assemble into 2 heptameric rings which stack back to back to give a disk-like structure with a central cavity, resembling the structure of eukaryotic proteasomes.

It is found in the cytoplasm. It catalyses the reaction Hydrolysis of proteins to small peptides in the presence of ATP and magnesium. alpha-casein is the usual test substrate. In the absence of ATP, only oligopeptides shorter than five residues are hydrolyzed (such as succinyl-Leu-Tyr-|-NHMec, and Leu-Tyr-Leu-|-Tyr-Trp, in which cleavage of the -Tyr-|-Leu- and -Tyr-|-Trp bonds also occurs).. Cleaves peptides in various proteins in a process that requires ATP hydrolysis. Has a chymotrypsin-like activity. Plays a major role in the degradation of misfolded proteins. The polypeptide is ATP-dependent Clp protease proteolytic subunit (Caldicellulosiruptor saccharolyticus (strain ATCC 43494 / DSM 8903 / Tp8T 6331)).